An 875-amino-acid polypeptide reads, in one-letter code: Outer membrane usher protein FocD (875 aa).

An N-terminal signal peptide occupies residues 1–38 (MFFGDGGQLLSDKSLTGSAGGGNNRMKFNILPLAFFIG). Cys852 and Cys874 are oxidised to a cystine.

It belongs to the fimbrial export usher family.

It is found in the cell outer membrane. Functionally, involved in the export and assembly of the F1C fimbriae subunits across the outer membrane. The protein is Outer membrane usher protein FocD (focD) of Escherichia coli.